The primary structure comprises 251 residues: UPF0246 protein PEPE_1842 (251 aa).

The protein belongs to the UPF0246 family.

This chain is UPF0246 protein PEPE_1842, found in Pediococcus pentosaceus (strain ATCC 25745 / CCUG 21536 / LMG 10740 / 183-1w).